The following is a 242-amino-acid chain: Small ribosomal subunit protein uS3 (242 aa).

The region spanning 39-110 (IRKFIHKKYG…QVRINVVEVE (72 aa)) is the KH type-2 domain. Positions 221 to 242 (GASPRRRASRRPQQFEDRSNEG) are disordered. Positions 233–242 (QQFEDRSNEG) are enriched in basic and acidic residues.

The protein belongs to the universal ribosomal protein uS3 family. In terms of assembly, part of the 30S ribosomal subunit. Forms a tight complex with proteins S10 and S14.

Binds the lower part of the 30S subunit head. Binds mRNA in the 70S ribosome, positioning it for translation. The chain is Small ribosomal subunit protein uS3 from Parasynechococcus marenigrum (strain WH8102).